We begin with the raw amino-acid sequence, 471 residues long: MAAPEPLSPAGGAGEEAPEEDEDEAEAEDPERPNAGAGGGRSGGGGSSVSGGGGGGGAGAGGCGGPGGALTRRAVTLRVLLKDALLEPGAGVLSIYYLGKKFLGDLQPDGRIMWQETGQTFNSPSAWATHCKKLVNPAKKSGCGWASVKYKGQKLDKYKATWLRLHQLHTPATAADESPASEGEEEELLMEEEEEDVLAGVSAEDKSRRPLGKSPSEPAHPEATTPGKRVDSKIRVPVRYCMLGSRDLARNPHTLVEVTSFAAINKFQPFNVAVSSNVLFLLDFHSHLTRSEVVGYLGGRWDVNSQMLTVLRAFPCRSRLGDAETAAAIEEEIYQSLFLRGLSLVGWYHSHPHSPALPSLQDIDAQMDYQLRLQGSSNGFQPCLALLCSPYYSGNPGPESKISPFWVMPPPEMLLVEFYKGSPDLVRLQEPWSQEHTYLDKLKISLASRTPKDQSLCHVLEQVCGVLKQGS.

Residues 1–10 (MAAPEPLSPA) are compositionally biased toward low complexity. Residues 1–63 (MAAPEPLSPA…GGGGAGAGGC (63 aa)) are disordered. A2 carries the N-acetylalanine modification. S8 is subject to Phosphoserine. Acidic residues predominate over residues 16-29 (EAPEEDEDEAEAED). A compositionally biased stretch (gly residues) spans 36-63 (GAGGGRSGGGGSSVSGGGGGGGAGAGGC). The 96-residue stretch at 71–166 (TRRAVTLRVL…KYKATWLRLH (96 aa)) folds into the RAMA domain. Positions 123, 125, and 145 each coordinate DNA. Residues 170-229 (TPATAADESPASEGEEEELLMEEEEEDVLAGVSAEDKSRRPLGKSPSEPAHPEATTPGKR) form a disordered region. Phosphoserine is present on residues S178 and S181. Positions 182–197 (EGEEEELLMEEEEEDV) are enriched in acidic residues. The 136-residue stretch at 272 to 407 (VAVSSNVLFL…PESKISPFWV (136 aa)) folds into the MPN domain. Residues H349, H351, and D362 each coordinate Zn(2+). Residues 349-362 (HSHPHSPALPSLQD) carry the JAMM motif motif.

This sequence belongs to the peptidase M67 family. Monomer. Mainly monomoric, but when binds to dsDNA, forms homotetramer assembled into two homodimers. May interact with histones; this interaction is facilitated by dsDNA binding. In terms of processing, degraded following binding to N(6)-methyladenosine methylated DNA (m6A).

Functionally, probable protease. Acts as a sensor of N(6)-methyladenosine methylation on DNA (m6A): recognizes and binds m6A DNA, leading to its degradation. Binds only double strand DNA (dsDNA) in a sequence-independent manner. The chain is MPN domain-containing protein from Homo sapiens (Human).